Reading from the N-terminus, the 55-residue chain is DNA-directed RNA polymerase subunit Rpo10 (55 aa).

Positions 6, 9, 43, and 44 each coordinate Zn(2+).

It belongs to the archaeal Rpo10/eukaryotic RPB10 RNA polymerase subunit family. In terms of assembly, part of the RNA polymerase complex. Zn(2+) is required as a cofactor.

The protein localises to the cytoplasm. The catalysed reaction is RNA(n) + a ribonucleoside 5'-triphosphate = RNA(n+1) + diphosphate. Functionally, DNA-dependent RNA polymerase (RNAP) catalyzes the transcription of DNA into RNA using the four ribonucleoside triphosphates as substrates. The chain is DNA-directed RNA polymerase subunit Rpo10 from Methanothermobacter thermautotrophicus (strain ATCC 29096 / DSM 1053 / JCM 10044 / NBRC 100330 / Delta H) (Methanobacterium thermoautotrophicum).